Reading from the N-terminus, the 723-residue chain is Nuclear intron maturase 3, mitochondrial (723 aa).

Residues 1-26 constitute a mitochondrion transit peptide; it reads MVLRLRVHSFYNRGISFLVSSSLRNL. Residues 532–597 are intron maturase type-2; degenerate; it reads VSAPEELVRK…HYTKDLRVSD (66 aa). The segment at 646 to 700 adopts a THAP-type zinc-finger fold; that stretch reads CAASFCERSDTIMHRVHLLQNRLHINPLDEEKWVPGMGTIHSALNRKCLPLCSTH.

It belongs to the plant nuclear intron maturase (nMat) family.

It localises to the mitochondrion. Its function is as follows. Nuclear-encoded maturase required for splicing of group-II introns in mitochondria. Necessary for mitochondrial biogenesis during early developmental stages. In Arabidopsis thaliana (Mouse-ear cress), this protein is Nuclear intron maturase 3, mitochondrial.